A 325-amino-acid polypeptide reads, in one-letter code: MNSSSHLTLLDLTLNASEDNILGQNVNNKSSACEDMGIAVEVFLTLGLVSLLENILVIGAIVKNKNLHSPMYFFVGSLAVADMLVSMSNAWETITIYLINNKHVVIADTFVRHIDNVFDSMICISVVASMCSLLAIAVDRYITIFYALRYHHIMTARRSGVIIACIWTFCISCGIVFIIYYESKYVIVCLISMFFTMLFFMVSLYIHMFLLARNHVKRIAASPRYNSVRQRASMKGAITLTMLLGIFIVCWSPFFLHLILMISCPQNVYCACFMSYFNMYLILIMCNSVIDPLIYALRSQEMRRTFKEIICCHGFRRTCTLLGRY.

Residues 1-37 are Extracellular-facing; sequence MNSSSHLTLLDLTLNASEDNILGQNVNNKSSACEDMG. Asn2, Asn15, and Asn28 each carry an N-linked (GlcNAc...) asparagine glycan. The helical transmembrane segment at 38–61 threads the bilayer; that stretch reads IAVEVFLTLGLVSLLENILVIGAI. The Cytoplasmic portion of the chain corresponds to 62-73; that stretch reads VKNKNLHSPMYF. Residues 74–97 traverse the membrane as a helical segment; it reads FVGSLAVADMLVSMSNAWETITIY. The Extracellular segment spans residues 98 to 114; it reads LINNKHVVIADTFVRHI. Residues 115-138 traverse the membrane as a helical segment; it reads DNVFDSMICISVVASMCSLLAIAV. The Cytoplasmic portion of the chain corresponds to 139 to 155; the sequence is DRYITIFYALRYHHIMT. A helical transmembrane segment spans residues 156–179; sequence ARRSGVIIACIWTFCISCGIVFII. Residues 180-186 are Extracellular-facing; it reads YYESKYV. A helical transmembrane segment spans residues 187–211; it reads IVCLISMFFTMLFFMVSLYIHMFLL. Residues 212–239 are Cytoplasmic-facing; it reads ARNHVKRIAASPRYNSVRQRASMKGAIT. Residues 240-265 traverse the membrane as a helical segment; that stretch reads LTMLLGIFIVCWSPFFLHLILMISCP. At 266–273 the chain is on the extracellular side; the sequence is QNVYCACF. Residues 274 to 297 form a helical membrane-spanning segment; the sequence is MSYFNMYLILIMCNSVIDPLIYAL. Topologically, residues 298-325 are cytoplasmic; sequence RSQEMRRTFKEIICCHGFRRTCTLLGRY. S-palmitoyl cysteine attachment occurs at residues Cys311 and Cys312.

This sequence belongs to the G-protein coupled receptor 1 family. Very low expression levels is detected in brain, while high levels are found in adrenals, stomach, lung and spleen.

The protein localises to the cell membrane. Functionally, receptor for MSH (alpha, beta and gamma) and ACTH. The activity of this receptor is mediated by G proteins which activate adenylate cyclase. This receptor is a possible mediator of the immunomodulation properties of melanocortins. In Rattus norvegicus (Rat), this protein is Melanocortin receptor 5 (Mc5r).